Reading from the N-terminus, the 158-residue chain is Protein-export protein SecB (158 aa).

This sequence belongs to the SecB family. In terms of assembly, homotetramer, a dimer of dimers. One homotetramer interacts with 1 SecA dimer.

The protein resides in the cytoplasm. In terms of biological role, one of the proteins required for the normal export of preproteins out of the cell cytoplasm. It is a molecular chaperone that binds to a subset of precursor proteins, maintaining them in a translocation-competent state. It also specifically binds to its receptor SecA. This is Protein-export protein SecB from Bartonella quintana (strain Toulouse) (Rochalimaea quintana).